A 484-amino-acid polypeptide reads, in one-letter code: Poly(A) RNA polymerase GLD2 (484 aa).

A phosphoserine mark is found at S62 and S69. Positions 76 to 92 (KRISDEKAFRLDGKRQR) match the Nuclear localization signal motif. S95 carries the phosphoserine modification. Positions 213 and 215 each coordinate Mg(2+). Positions 386–440 (SLGDLLLGFLKYYATEFDWNTQMISVREAKAIPRPDDMEWRNKYICVEEPFDGTN) constitute a PAP-associated domain.

This sequence belongs to the DNA polymerase type-B-like family. GLD2 subfamily. Interacts with CPEB1, CPEB2, CPSF1 and PABPC1. Interacts with QKI isoform QKI7; promoting recruitment to miRNA miR-122 and miR-122 stabilization. Mg(2+) is required as a cofactor. Mn(2+) serves as cofactor.

It is found in the cytoplasm. The protein resides in the nucleus. It catalyses the reaction RNA(n) + ATP = RNA(n)-3'-adenine ribonucleotide + diphosphate. Functionally, cytoplasmic poly(A) RNA polymerase that adds successive AMP monomers to the 3'-end of specific RNAs, forming a poly(A) tail. In contrast to the canonical nuclear poly(A) RNA polymerase, it only adds poly(A) to selected cytoplasmic mRNAs. Does not play a role in replication-dependent histone mRNA degradation. Adds a single nucleotide to the 3' end of specific miRNAs, monoadenylation stabilizes and prolongs the activity of some but not all miRNAs. The protein is Poly(A) RNA polymerase GLD2 of Rattus norvegicus (Rat).